A 444-amino-acid polypeptide reads, in one-letter code: Phosphoglucosamine mutase (444 aa).

The active-site Phosphoserine intermediate is the serine 102. Positions 102, 241, 243, and 245 each coordinate Mg(2+). A Phosphoserine modification is found at serine 102.

It belongs to the phosphohexose mutase family. It depends on Mg(2+) as a cofactor. Activated by phosphorylation.

The catalysed reaction is alpha-D-glucosamine 1-phosphate = D-glucosamine 6-phosphate. In terms of biological role, catalyzes the conversion of glucosamine-6-phosphate to glucosamine-1-phosphate. In Buchnera aphidicola subsp. Acyrthosiphon pisum (strain 5A), this protein is Phosphoglucosamine mutase.